The sequence spans 98 residues: Putative zinc finger protein ORF98b (98 aa).

The C2H2-type zinc finger occupies 54–77 (GFCPYCHNHYRTFGILANHIMRSH).

In Acidianus convivator (ATV), this protein is Putative zinc finger protein ORF98b.